A 91-amino-acid chain; its full sequence is Acylphosphatase (91 aa).

Residues 5–91 (RAHVFVSGRV…EGVDGFEVRW (87 aa)) form the Acylphosphatase-like domain. Residues Arg-20 and Asn-38 contribute to the active site.

The protein belongs to the acylphosphatase family.

The catalysed reaction is an acyl phosphate + H2O = a carboxylate + phosphate + H(+). This is Acylphosphatase (acyP) from Haloarcula marismortui (strain ATCC 43049 / DSM 3752 / JCM 8966 / VKM B-1809) (Halobacterium marismortui).